The following is a 372-amino-acid chain: Queuine tRNA-ribosyltransferase (372 aa).

Aspartate 89 serves as the catalytic Proton acceptor. Residues 89-93 (DSGGF), aspartate 143, glutamine 185, and glycine 212 each bind substrate. The interval 243–249 (GVGKPED) is RNA binding. The active-site Nucleophile is aspartate 262. Residues 267–271 (TRNAR) form an RNA binding; important for wobble base 34 recognition region. Positions 300, 302, 305, and 331 each coordinate Zn(2+).

It belongs to the queuine tRNA-ribosyltransferase family. As to quaternary structure, homodimer. Within each dimer, one monomer is responsible for RNA recognition and catalysis, while the other monomer binds to the replacement base PreQ1. Zn(2+) is required as a cofactor.

It catalyses the reaction 7-aminomethyl-7-carbaguanine + guanosine(34) in tRNA = 7-aminomethyl-7-carbaguanosine(34) in tRNA + guanine. Its pathway is tRNA modification; tRNA-queuosine biosynthesis. Functionally, catalyzes the base-exchange of a guanine (G) residue with the queuine precursor 7-aminomethyl-7-deazaguanine (PreQ1) at position 34 (anticodon wobble position) in tRNAs with GU(N) anticodons (tRNA-Asp, -Asn, -His and -Tyr). Catalysis occurs through a double-displacement mechanism. The nucleophile active site attacks the C1' of nucleotide 34 to detach the guanine base from the RNA, forming a covalent enzyme-RNA intermediate. The proton acceptor active site deprotonates the incoming PreQ1, allowing a nucleophilic attack on the C1' of the ribose to form the product. After dissociation, two additional enzymatic reactions on the tRNA convert PreQ1 to queuine (Q), resulting in the hypermodified nucleoside queuosine (7-(((4,5-cis-dihydroxy-2-cyclopenten-1-yl)amino)methyl)-7-deazaguanosine). The chain is Queuine tRNA-ribosyltransferase from Chromohalobacter salexigens (strain ATCC BAA-138 / DSM 3043 / CIP 106854 / NCIMB 13768 / 1H11).